We begin with the raw amino-acid sequence, 549 residues long: MEGQWGRWRLAAAAAASSSGDQIAAAWAVVRARAVAPVLQFAVWACMAMSVMLVLEVAYMSLVSLVAVKLLRRVPERRYKWEPITTGSGGVGGGDGEDEEAATGGREAAAFPMVLVQIPMYNEKEVYKLSIGAACALTWPPDRIIIQVLDDSTDPAIKDLVELECKDWARKEINIKYEIRDNRKGYKAGALKKGMEHIYTQQCDFVAIFDADFQPESDFLLKTIPFLVHNPKIGLVQTRWEFVNYDVCLMTRIQKMSLDYHFKVEQESGSSMHSFFGFNGTAGVWRVSAINEAGGWKDRTTVEDMDLAVRASLKGWQFLYVGDIRVKSELPSTFKAYRHQQHRWTCGAANLFRKMATEIAKNKGVSVWKKLHLLYSFFFVRRVVAPILTFLFYCVVIPLSVMVPEVSIPVWGMVYIPTAITIMNAIRNPGSIHLMPFWILFENVMAMHRMRAALTGLLETMNVNQWVVTEKVGDHVKDKLEVPLLEPLKPTDCVERIYIPELMVAFYLLVCASYDLVLGAKHYYLYIYLQAFAFIALGFGFAGTSTPCS.

Residues Val35–Leu55 traverse the membrane as a helical segment. The active site involves Asp151. Asp210 and Asp212 together coordinate substrate. Asp304 is a catalytic residue. The next 4 membrane-spanning stretches (helical) occupy residues Val383 to Val403, Val406 to Ile426, Ile497 to Val517, and Tyr523 to Gly543.

It belongs to the glycosyltransferase 2 family. Plant cellulose synthase-like A subfamily.

Its subcellular location is the golgi apparatus membrane. The catalysed reaction is GDP-mannose + (glucomannan)n = GDP + (glucomannan)n+1.. Probable mannan synthase which consists of a 4-beta-mannosyltransferase activity on mannan using GDP-mannose. The beta-1,4-mannan product is the backbone for galactomannan synthesis by galactomannan galactosyltransferase. Galactomannan is a noncellulosic polysaccharides of plant cell wall. The chain is Probable glucomannan 4-beta-mannosyltransferase 4 from Oryza sativa subsp. japonica (Rice).